We begin with the raw amino-acid sequence, 122 residues long: Ribosome-binding factor A (122 aa).

Belongs to the RbfA family. Monomer. Binds 30S ribosomal subunits, but not 50S ribosomal subunits or 70S ribosomes.

Its subcellular location is the cytoplasm. One of several proteins that assist in the late maturation steps of the functional core of the 30S ribosomal subunit. Associates with free 30S ribosomal subunits (but not with 30S subunits that are part of 70S ribosomes or polysomes). Required for efficient processing of 16S rRNA. May interact with the 5'-terminal helix region of 16S rRNA. This chain is Ribosome-binding factor A, found in Cupriavidus pinatubonensis (strain JMP 134 / LMG 1197) (Cupriavidus necator (strain JMP 134)).